We begin with the raw amino-acid sequence, 166 residues long: Ferric nitrobindin-like protein (166 aa).

The GXWXGXG signature appears at 21 to 27 (GHWEGEG).

The protein belongs to the nitrobindin family.

The polypeptide is Ferric nitrobindin-like protein (Cutibacterium acnes (strain DSM 16379 / KPA171202) (Propionibacterium acnes)).